The primary structure comprises 110 residues: Large ribosomal subunit protein uL22 (110 aa).

The protein belongs to the universal ribosomal protein uL22 family. In terms of assembly, part of the 50S ribosomal subunit.

Functionally, this protein binds specifically to 23S rRNA; its binding is stimulated by other ribosomal proteins, e.g. L4, L17, and L20. It is important during the early stages of 50S assembly. It makes multiple contacts with different domains of the 23S rRNA in the assembled 50S subunit and ribosome. In terms of biological role, the globular domain of the protein is located near the polypeptide exit tunnel on the outside of the subunit, while an extended beta-hairpin is found that lines the wall of the exit tunnel in the center of the 70S ribosome. This Alkaliphilus metalliredigens (strain QYMF) protein is Large ribosomal subunit protein uL22.